The chain runs to 83 residues: Cytochrome b559 subunit alpha (83 aa).

A helical membrane pass occupies residues 21 to 35; the sequence is VIHSITIPSLFIAGW. His23 lines the heme pocket.

It belongs to the PsbE/PsbF family. Heterodimer of an alpha subunit and a beta subunit. PSII is composed of 1 copy each of membrane proteins PsbA, PsbB, PsbC, PsbD, PsbE, PsbF, PsbH, PsbI, PsbJ, PsbK, PsbL, PsbM, PsbT, PsbX, PsbY, PsbZ, Psb30/Ycf12, at least 3 peripheral proteins of the oxygen-evolving complex and a large number of cofactors. It forms dimeric complexes. The cofactor is heme b.

The protein localises to the plastid. The protein resides in the chloroplast thylakoid membrane. In terms of biological role, this b-type cytochrome is tightly associated with the reaction center of photosystem II (PSII). PSII is a light-driven water:plastoquinone oxidoreductase that uses light energy to abstract electrons from H(2)O, generating O(2) and a proton gradient subsequently used for ATP formation. It consists of a core antenna complex that captures photons, and an electron transfer chain that converts photonic excitation into a charge separation. In Anthoceros angustus (Hornwort), this protein is Cytochrome b559 subunit alpha.